A 352-amino-acid chain; its full sequence is Photosystem II D2 protein (352 aa).

The residue at position 2 (Thr2) is an N-acetylthreonine. Phosphothreonine is present on Thr2. The chain crosses the membrane as a helical span at residues 40 to 60; sequence CAYFALGGWLTGTTFVTSWYT. His117 lines the chlorophyll a pocket. A helical membrane pass occupies residues 124–140; sequence GFMLRQFEIARSVNLRP. Pheophytin a is bound by residues Gln129 and Asn142. Residues 152–165 form a helical membrane-spanning segment; it reads VFVSVFLIYPLGQS. Residue His197 participates in chlorophyll a binding. A helical membrane pass occupies residues 207-227; the sequence is AALLCAIHGATVENTLFEDGD. Positions 214 and 261 each coordinate a plastoquinone. His214 provides a ligand contact to Fe cation. His268 serves as a coordination point for Fe cation. The chain crosses the membrane as a helical span at residues 278–294; it reads GLWMSAIGVVGLALNLR.

It belongs to the reaction center PufL/M/PsbA/D family. In terms of assembly, PSII is composed of 1 copy each of membrane proteins PsbA, PsbB, PsbC, PsbD, PsbE, PsbF, PsbH, PsbI, PsbJ, PsbK, PsbL, PsbM, PsbT, PsbX, PsbY, PsbZ, Psb30/Ycf12, at least 3 peripheral proteins of the oxygen-evolving complex and a large number of cofactors. It forms dimeric complexes. The cofactor is The D1/D2 heterodimer binds P680, chlorophylls that are the primary electron donor of PSII, and subsequent electron acceptors. It shares a non-heme iron and each subunit binds pheophytin, quinone, additional chlorophylls, carotenoids and lipids. There is also a Cl(-1) ion associated with D1 and D2, which is required for oxygen evolution. The PSII complex binds additional chlorophylls, carotenoids and specific lipids.. Post-translationally, phosphorylated in vitro.

The protein localises to the plastid. The protein resides in the chloroplast thylakoid membrane. The enzyme catalyses 2 a plastoquinone + 4 hnu + 2 H2O = 2 a plastoquinol + O2. Functionally, photosystem II (PSII) is a light-driven water:plastoquinone oxidoreductase that uses light energy to abstract electrons from H(2)O, generating O(2) and a proton gradient subsequently used for ATP formation. It consists of a core antenna complex that captures photons, and an electron transfer chain that converts photonic excitation into a charge separation. The D1/D2 (PsbA/PsbD) reaction center heterodimer binds P680, the primary electron donor of PSII as well as several subsequent electron acceptors. D2 is needed for assembly of a stable PSII complex. This Chlamydomonas reinhardtii (Chlamydomonas smithii) protein is Photosystem II D2 protein.